The primary structure comprises 127 residues: Fluoride-specific ion channel FluC (127 aa).

The next 2 helical transmembrane spans lie at 4-24 and 36-56; these read WFWIGLGGAAGTLARYGLSTW and GTLAVNVIGSFLLGAIGEIAA. Residues Gly-75 and Thr-78 each coordinate Na(+). Residues 100–120 traverse the membrane as a helical segment; that stretch reads LANIAITLVVCLLAGVLGMVV.

The protein belongs to the fluoride channel Fluc/FEX (TC 1.A.43) family.

The protein localises to the cell inner membrane. It catalyses the reaction fluoride(in) = fluoride(out). Its activity is regulated as follows. Na(+) is not transported, but it plays an essential structural role and its presence is essential for fluoride channel function. Its function is as follows. Fluoride-specific ion channel. Important for reducing fluoride concentration in the cell, thus reducing its toxicity. This Sorangium cellulosum (strain So ce56) (Polyangium cellulosum (strain So ce56)) protein is Fluoride-specific ion channel FluC.